A 313-amino-acid polypeptide reads, in one-letter code: Phosphoenolpyruvate phosphomutase (313 aa).

A disordered region spans residues 1–23 (MNATERPGSDGTGSPESVGSRLK). Asp69 (nucleophile) is an active-site residue.

It belongs to the isocitrate lyase/PEP mutase superfamily. PEP mutase family.

It catalyses the reaction phosphoenolpyruvate + H(+) = 3-phosphonopyruvate. Its pathway is secondary metabolite biosynthesis; bialaphos biosynthesis. Formation of a carbon-phosphorus bond by converting phosphoenolpyruvate (PEP) to phosphonopyruvate (P-Pyr). The chain is Phosphoenolpyruvate phosphomutase (ppm) from Streptomyces viridochromogenes (strain DSM 40736 / JCM 4977 / BCRC 1201 / Tue 494).